A 101-amino-acid polypeptide reads, in one-letter code: Large ribosomal subunit protein uL23 (101 aa).

This sequence belongs to the universal ribosomal protein uL23 family. As to quaternary structure, part of the 50S ribosomal subunit. Contacts protein L29, and trigger factor when it is bound to the ribosome.

One of the early assembly proteins it binds 23S rRNA. One of the proteins that surrounds the polypeptide exit tunnel on the outside of the ribosome. Forms the main docking site for trigger factor binding to the ribosome. This is Large ribosomal subunit protein uL23 from Paenarthrobacter aurescens (strain TC1).